Reading from the N-terminus, the 620-residue chain is Probable protein arginine N-methyltransferase 3 (620 aa).

Over residues 1–17 (MATREHELRPEQERLGE) the composition is skewed to basic and acidic residues. Residues 1–45 (MATREHELRPEQERLGEDREEYEDGEEEEEEEEEEEGWDDWESDG) are disordered. A compositionally biased stretch (acidic residues) spans 18-45 (DREEYEDGEEEEEEEEEEEGWDDWESDG). The segment at 55–78 (LLCLFCSARFDSESSLFSHCASEH) adopts a C2H2-type 1 zinc-finger fold. Residues 110-137 (NKCWSCGQVFSSNSELCGHLHALEIPQL) form a C2H2-type 2; degenerate zinc finger. One can recognise an SAM-dependent MTase PRMT-type domain in the interval 253-582 (DESYFGSYSS…DECPAVMIRS (330 aa)). Positions 275, 299, 321, 323, and 364 each coordinate S-adenosyl-L-homocysteine. Active-site residues include Glu383 and Glu392.

It belongs to the class I-like SAM-binding methyltransferase superfamily. Protein arginine N-methyltransferase family.

Its subcellular location is the cytoplasm. It is found in the cytosol. The enzyme catalyses L-arginyl-[protein] + S-adenosyl-L-methionine = N(omega)-methyl-L-arginyl-[protein] + S-adenosyl-L-homocysteine + H(+). It catalyses the reaction L-arginyl-[protein] + 2 S-adenosyl-L-methionine = N(omega),N(omega)-dimethyl-L-arginyl-[protein] + 2 S-adenosyl-L-homocysteine + 2 H(+). Functionally, protein-arginine N-methyltransferase that catalyzes both the monomethylation and asymmetric dimethylation of the guanidino nitrogens of arginine residues in target proteins, and therefore falls into the group of type I methyltransferases. This Oryza sativa subsp. indica (Rice) protein is Probable protein arginine N-methyltransferase 3 (PRMT3).